Reading from the N-terminus, the 320-residue chain is Protein phosphatase PTC7 homolog fig (320 aa).

The 267-residue stretch at 49 to 315 folds into the PPM-type phosphatase domain; that stretch reads PYLVTAVQGR…DDITLILASV (267 aa). Mn(2+) contacts are provided by Asp93, Gly94, and Asp238.

The protein belongs to the PP2C family. Mg(2+) is required as a cofactor. Requires Mn(2+) as cofactor.

It catalyses the reaction O-phospho-L-seryl-[protein] + H2O = L-seryl-[protein] + phosphate. It carries out the reaction O-phospho-L-threonyl-[protein] + H2O = L-threonyl-[protein] + phosphate. The chain is Protein phosphatase PTC7 homolog fig from Drosophila yakuba (Fruit fly).